The sequence spans 205 residues: MSEKGGKGLKSSLKSKDGGKDGSSTKLKKGRKIHFDQRTPPANYKILNVSSDQQPFQSSAAKCGKSDKPTKSSKNSLHSFELKDLPENAECMMDCEAFQILDGIKGQLVGLSEDPSIKIPVSYDRALAYVESCVHYTNPQSVRKVLEPLKTYGISDGEMCVIANASSESVDEVLAFIPSLKTKKEVINQPLQDALEELSKLKKSE.

The segment at 1 to 79 is disordered; the sequence is MSEKGGKGLK…TKSSKNSLHS (79 aa). Over residues 48–60 the composition is skewed to polar residues; it reads NVSSDQQPFQSSA.

The protein belongs to the eukaryotic RPB4 RNA polymerase subunit family. As to quaternary structure, component of the RNA polymerase IV and V complexes. Interacts with NRPD1 and NRPE1. In terms of tissue distribution, expressed in shoot meristematic region and in root tips. Detected in cotyledons, flowers and young leaves.

The protein localises to the nucleus. DNA-dependent RNA polymerase catalyzes the transcription of DNA into RNA using the four ribonucleoside triphosphates as substrates. Component of RNA polymerases IV and V which mediate short-interfering RNAs (siRNA) accumulation and subsequent RNA-directed DNA methylation-dependent (RdDM) transcriptional gene silencing (TGS) of endogenous repeated sequences, including transposable elements. Required for the de novo DNA methylation directed by the RdDM pathway. The polypeptide is DNA-directed RNA polymerases IV and V subunit 4 (NRPD4) (Arabidopsis thaliana (Mouse-ear cress)).